The chain runs to 675 residues: Protein brown (675 aa).

The Cytoplasmic portion of the chain corresponds to 1–419 (MQESGGSSGQ…TEDLRNIRSG (419 aa)). In terms of domain architecture, ABC transporter spans 34–261 (YSFWNECRKK…EVVAESHESL (228 aa)). Residue 66–73 (GGSGAGKT) participates in ATP binding. Residues 229 to 249 (EDSFETPSGESSASGSGSKSI) form a disordered region. A compositionally biased stretch (low complexity) spans 236–248 (SGESSASGSGSKS). A helical membrane pass occupies residues 420 to 440 (LIAFGFFMITAVTLSLMYSGI). The Extracellular segment spans residues 441-460 (GGLTQRTVQDVGGSIFMLSN). The chain crosses the membrane as a helical span at residues 461–481 (EMIFTFSYGVTYIFPAALPII). The Cytoplasmic segment spans residues 482 to 497 (RREVGEGTYSLSAYYV). A helical membrane pass occupies residues 498–518 (ALVLSFVPVAFFKGYVFLSVI). Topologically, residues 519-531 (YASIYYTRGFLLY) are extracellular. The chain crosses the membrane as a helical span at residues 532-552 (LSMGFLMSLSAVAAVGYGVFL). Residues 553–568 (SSLFESDKMASECAAP) lie on the Cytoplasmic side of the membrane. The helical transmembrane segment at 569–589 (FDLIFLIFGGTYMNVDTVPGL) threads the bilayer. Over 590-644 (KYLSLFFYSNEALMYKFWIDIDNIDCPVNEDHPCIKTGVEVLQQGSYRNADYTYW) the chain is Extracellular. Residues 645 to 665 (LDCFSLVVVAVIFHIVSFGLV) traverse the membrane as a helical segment. Over 666 to 675 (RRYIHRSGYY) the chain is Cytoplasmic.

This sequence belongs to the ABC transporter superfamily. ABCG family. Eye pigment precursor importer (TC 3.A.1.204) subfamily. As to quaternary structure, may form a heterodimer with w/white.

The protein localises to the membrane. The catalysed reaction is guanine(out) + ATP + H2O = guanine(in) + ADP + phosphate + H(+). The enzyme catalyses riboflavin(in) + ATP + H2O = riboflavin(out) + ADP + phosphate + H(+). It carries out the reaction (6S)-5,6,7,8-tetrahydrofolate(out) + ATP + H2O = (6S)-5,6,7,8-tetrahydrofolate(in) + ADP + phosphate + H(+). Functionally, ATP-dependent transporter of the ATP-binding cassette (ABC) family which transports various molecules including bioamines, neurotransmitters and metabolic intermediates. In the eye and probably in association with w/white, required for the transport of the eye red pigment precursor, guanine, into pigment cell granules. In Malpighian tubules, involved in guanine uptake. Probably in association with w/white, involved in aging-induced intestinal stem cell proliferation in the midgut by regulating tetrahydrofolate transport. The chain is Protein brown from Drosophila melanogaster (Fruit fly).